The following is an 85-amino-acid chain: Large ribosomal subunit protein bL27 (85 aa).

This sequence belongs to the bacterial ribosomal protein bL27 family.

The chain is Large ribosomal subunit protein bL27 from Leptospira biflexa serovar Patoc (strain Patoc 1 / Ames).